A 228-amino-acid chain; its full sequence is Triosephosphate isomerase (228 aa).

12–14 is a substrate binding site; sequence NFK. The active-site Electrophile is histidine 96. Glutamate 144 acts as the Proton acceptor in catalysis. Substrate is bound by residues isoleucine 149, glycine 184, and 205–206; that span reads AS.

This sequence belongs to the triosephosphate isomerase family. Homotetramer; dimer of dimers.

The protein localises to the cytoplasm. It catalyses the reaction D-glyceraldehyde 3-phosphate = dihydroxyacetone phosphate. Its pathway is carbohydrate biosynthesis; gluconeogenesis. It functions in the pathway carbohydrate degradation; glycolysis; D-glyceraldehyde 3-phosphate from glycerone phosphate: step 1/1. Involved in the gluconeogenesis. Catalyzes stereospecifically the conversion of dihydroxyacetone phosphate (DHAP) to D-glyceraldehyde-3-phosphate (G3P). The sequence is that of Triosephosphate isomerase from Pyrococcus furiosus (strain ATCC 43587 / DSM 3638 / JCM 8422 / Vc1).